Reading from the N-terminus, the 355-residue chain is Tetraspanin-10 (355 aa).

Residues 1–33 (MEEGERSPLLSQETAGQKPLSVHRPPTSGCLGP) form a disordered region. Residues 1-78 (MEEGERSPLL…LSPGSSCVKY (78 aa)) lie on the Cytoplasmic side of the membrane. A helical membrane pass occupies residues 79-99 (LIFLSNFPFSLLGLLALAIGL). Residues 100 to 120 (WGLAVKGSLGSDLGGPLPTDP) are Extracellular-facing. The helical transmembrane segment at 121–141 (MLGLALGGLVVSAASLAGCLG) threads the bilayer. Over 142–154 (ALCENTCLLRGFS) the chain is Cytoplasmic. The helical transmembrane segment at 155–175 (GGILAFLVLEAVAGALVVALW) threads the bilayer. The Extracellular segment spans residues 176–355 (GPLQDSLEHT…APPAAKPARG (180 aa)). Disulfide bonds link Cys-212/Cys-279, Cys-213/Cys-243, Cys-229/Cys-237, and Cys-244/Cys-258. Asn-228 is a glycosylation site (N-linked (GlcNAc...) asparagine). Residues 327–355 (YGPGAHGEDRAGPQSPSPGAPPAAKPARG) form a disordered region. Residues 341 to 355 (SPSPGAPPAAKPARG) are compositionally biased toward pro residues.

This sequence belongs to the tetraspanin (TM4SF) family. Interacts with ADAM10. In terms of tissue distribution, expressed in the eye, including iris, ciliary body, retinal pigment epithelium, but not lens (protein level).

Its subcellular location is the cell membrane. Functionally, part of TspanC8 subgroup, composed of 6 members that interact with the transmembrane metalloprotease ADAM10. This interaction is required for ADAM10 exit from the endoplasmic reticulum and for enzymatic maturation and trafficking to the cell surface as well as substrate specificity. Different TspanC8/ADAM10 complexes have distinct substrates. The polypeptide is Tetraspanin-10 (Homo sapiens (Human)).